Consider the following 444-residue polypeptide: Dihydroorotate dehydrogenase (quinone), mitochondrial (444 aa).

Residues 34–56 (GGASRYIIGTASVLVGAMAGFYI) form a helical membrane-spanning segment. Residues 124–128 (AGLDK) and Thr-148 contribute to the FMN site. A substrate-binding site is contributed by Lys-128. Substrate is bound at residue 173–177 (NRYGF). Residues Asn-220 and Asn-250 each contribute to the FMN site. 250-255 (NVSSPN) contacts substrate. The Nucleophile role is filled by Ser-253. Lys-301 and Ser-329 together coordinate FMN. A substrate-binding site is contributed by 330 to 331 (NT). FMN-binding positions include Gly-355, Gly-385, and 406–407 (YT).

Belongs to the dihydroorotate dehydrogenase family. Type 2 subfamily. FMN serves as cofactor.

It is found in the mitochondrion inner membrane. The enzyme catalyses (S)-dihydroorotate + a quinone = orotate + a quinol. It participates in pyrimidine metabolism; UMP biosynthesis via de novo pathway; orotate from (S)-dihydroorotate (quinone route): step 1/1. Its function is as follows. Catalyzes the conversion of dihydroorotate to orotate with quinone as electron acceptor. The chain is Dihydroorotate dehydrogenase (quinone), mitochondrial (URA9) from Eremothecium gossypii (strain ATCC 10895 / CBS 109.51 / FGSC 9923 / NRRL Y-1056) (Yeast).